A 417-amino-acid chain; its full sequence is Alpha-ionylideneethane synthase aba3 (417 aa).

The protein belongs to the alpha-ionylideneethane synthase family.

Its pathway is hormone biosynthesis. Alpha-ionylideneethane synthase; part of the gene cluster that mediates the biosynthesis of abscisic acid (ABA), a phytohormone that acts antagonistically toward salicylic acid (SA), jasmonic acid (JA) and ethylene (ETH) signaling, to impede plant defense responses. The first step of the pathway catalyzes the reaction from farnesyl diphosphate to alpha-ionylideneethane performed by the alpha-ionylideneethane synthase aba3 via a three-step reaction mechanism involving 2 neutral intermediates, beta-farnesene and allofarnesene. The cytochrome P450 monooxygenase aba1 might then be involved in the conversion of alpha-ionylideneethane to alpha-ionylideneacetic acid. Alpha-ionylideneacetic acid is further converted to abscisic acid in 2 steps involving the cytochrome P450 monooxygenase aba2 and the short-chain dehydrogenase/reductase aba4, via the intermediates 1'-deoxy-ABA or 1',4'-trans-diol-ABA, depending on the order of action of these 2 enzymes. Aba2 is responsible for the hydroxylation of carbon atom C-1' and aba4 might be involved in the oxidation of the C-4' carbon atom. The protein is Alpha-ionylideneethane synthase aba3 of Botryotinia fuckeliana (Noble rot fungus).